We begin with the raw amino-acid sequence, 204 residues long: uncharacterized protein (204 aa).

As to expression, component of the acid-soluble organic matrix of the aragonitic skeleton (at protein level).

The protein localises to the secreted. This is an uncharacterized protein from Acropora millepora (Staghorn coral).